A 344-amino-acid chain; its full sequence is S-methyl-5'-thioadenosine phosphorylase (344 aa).

Phosphate is bound by residues Thr-45, 88–89 (RH), and 121–122 (SA). Met-238 is a substrate binding site. Residue Ser-239 participates in phosphate binding. Position 262-264 (262-264 (DYD)) interacts with substrate.

Belongs to the PNP/MTAP phosphorylase family. MTAP subfamily. In terms of assembly, homotrimer.

It localises to the cytoplasm. The protein resides in the nucleus. The catalysed reaction is S-methyl-5'-thioadenosine + phosphate = 5-(methylsulfanyl)-alpha-D-ribose 1-phosphate + adenine. It participates in amino-acid biosynthesis; L-methionine biosynthesis via salvage pathway; S-methyl-5-thio-alpha-D-ribose 1-phosphate from S-methyl-5'-thioadenosine (phosphorylase route): step 1/1. Its function is as follows. Catalyzes the reversible phosphorylation of S-methyl-5'-thioadenosine (MTA) to adenine and 5-methylthioribose-1-phosphate. Involved in the breakdown of MTA, a major by-product of polyamine biosynthesis. Responsible for the first step in the methionine salvage pathway after MTA has been generated from S-adenosylmethionine. Has broad substrate specificity with 6-aminopurine nucleosides as preferred substrates. This Candida albicans (strain WO-1) (Yeast) protein is S-methyl-5'-thioadenosine phosphorylase.